A 261-amino-acid chain; its full sequence is Early 39 kDa protein (261 aa).

The tract at residues 215–261 (SYVPTPVSNKKRRAPPSAPKKIAKQRRDTKPPPTYVSDNTQDTNMSE) is disordered. Positions 250–261 (VSDNTQDTNMSE) are enriched in polar residues.

This is Early 39 kDa protein from Orgyia pseudotsugata multicapsid polyhedrosis virus (OpMNPV).